The following is a 571-amino-acid chain: 5' exonuclease Apollo (571 aa).

2 disordered regions span residues 346-386 (TSRP…TDRN) and 431-487 (MDDN…SMHD). Basic and acidic residues-rich tracts occupy residues 367–386 (NHDD…TDRN) and 453–468 (ECDH…EKSP). Residues 470–487 (MGSTNSGEMCSSMDSMHD) show a composition bias toward polar residues. Positions 501-532 (NPQSVTSAIPITLESEQFEHWLLENFTIPAEE) match the TBM motif.

This sequence belongs to the DNA repair metallo-beta-lactamase (DRMBL) family. As to quaternary structure, interacts with terf2; the interaction is direct.

It localises to the chromosome. The protein localises to the telomere. The protein resides in the nucleus. The catalysed reaction is a beta-lactam + H2O = a substituted beta-amino acid. In terms of biological role, 5'-3' exonuclease that plays a central role in telomere maintenance and protection during S-phase. Participates in the protection of telomeres against non-homologous end-joining (NHEJ)-mediated repair, thereby ensuring that telomeres do not fuse. Plays a key role in telomeric loop (T loop) formation by being recruited by terf2 at the leading end telomeres and by processing leading-end telomeres immediately after their replication via its exonuclease activity: generates 3' single-stranded overhang at the leading end telomeres avoiding blunt leading-end telomeres that are vulnerable to end-joining reactions and expose the telomere end in a manner that activates the DNA repair pathways. Possesses beta-lactamase activity, catalyzing the hydrolysis of penicillin G and nitrocefin. Exhibits no activity towards other beta-lactam antibiotic classes including cephalosporins (cefotaxime) and carbapenems (imipenem). This is 5' exonuclease Apollo (dclre1b) from Danio rerio (Zebrafish).